Reading from the N-terminus, the 368-residue chain is UPF0284 protein Cyan7425_0342 (368 aa).

Belongs to the UPF0284 family.

The protein is UPF0284 protein Cyan7425_0342 of Cyanothece sp. (strain PCC 7425 / ATCC 29141).